Reading from the N-terminus, the 85-residue chain is U4-theraphotoxin-Hhn1i (85 aa).

The first 22 residues, 1–22, serve as a signal peptide directing secretion; the sequence is MKVTLIAILTCAAVLVLHTTAA. The propeptide occupies 23 to 48; that stretch reads EELEAESQLMEVGMPDTELAAVDEER. 3 disulfides stabilise this stretch: Cys52/Cys66, Cys56/Cys77, and Cys71/Cys82.

This sequence belongs to the neurotoxin 12 (Hwtx-2) family. 02 (Hwtx-2) subfamily. Expressed by the venom gland.

It localises to the secreted. Postsynaptic neurotoxin. The chain is U4-theraphotoxin-Hhn1i from Cyriopagopus hainanus (Chinese bird spider).